A 623-amino-acid polypeptide reads, in one-letter code: Chaperone protein HtpG (623 aa).

The a; substrate-binding stretch occupies residues 1–328 (MTQEKKKFDA…SEDLPLNISR (328 aa)). Positions 329–544 (ESLQHNSILD…ESAMDIRMER (216 aa)) are b. Positions 545–623 (FLIEQKQIAN…DIVQKAILSL (79 aa)) are c.

The protein belongs to the heat shock protein 90 family. As to quaternary structure, homodimer.

The protein resides in the cytoplasm. In terms of biological role, molecular chaperone. Has ATPase activity. The sequence is that of Chaperone protein HtpG from Rickettsia canadensis (strain McKiel).